Reading from the N-terminus, the 586-residue chain is Aspartate--tRNA(Asp/Asn) ligase (586 aa).

Glu172 contributes to the L-aspartate binding site. Residues 196-199 (QLYK) are aspartate. Arg218 is a binding site for L-aspartate. ATP is bound by residues 218–220 (RDE) and Gln227. Residue His446 coordinates L-aspartate. Residue Glu480 participates in ATP binding. Arg487 contacts L-aspartate. 532–535 (GIDR) serves as a coordination point for ATP.

Belongs to the class-II aminoacyl-tRNA synthetase family. Type 1 subfamily. Homodimer.

The protein localises to the cytoplasm. The catalysed reaction is tRNA(Asx) + L-aspartate + ATP = L-aspartyl-tRNA(Asx) + AMP + diphosphate. Its function is as follows. Aspartyl-tRNA synthetase with relaxed tRNA specificity since it is able to aspartylate not only its cognate tRNA(Asp) but also tRNA(Asn). Reaction proceeds in two steps: L-aspartate is first activated by ATP to form Asp-AMP and then transferred to the acceptor end of tRNA(Asp/Asn). This is Aspartate--tRNA(Asp/Asn) ligase from Borrelia garinii subsp. bavariensis (strain ATCC BAA-2496 / DSM 23469 / PBi) (Borreliella bavariensis).